Here is a 501-residue protein sequence, read N- to C-terminus: MLLQNFSNTIFLLCLFFTLLSATKPLNLTLPHQHPSPDSVALHVIRSVNESLARRQLSSPSSSSSSSSSSSSSSCRTGNPIDDCWRCSDADWSTNRQRLADCSIGFGHGTLGGKNGKIYVVTDSSDNNPTNPTPGTLRYGVIQEEPLWIVFSSNMLIRLKQELIINSYKTLDGRGSAVHITGNGCLTLQYVQHIIIHNLHIYDCKPSAGFEKRGRSDGDGISIFGSQKIWVDHCSMSHCTDGLIDAVMGSTAITISNNYFTHHDEVMLLGHDDNYAPDTGMQVTIAFNHFGQGLVQRMPRCRRGYIHVVNNDFTEWKMYAIGGSGNPTINSQGNRYSAPSDPSAKEVTKRVDSKDDGEWSNWNWRTEGDLMENGAFFVASGEGMSSMYSKASSVDPKAASLVDQLTRNAGVFGGPRDDQGQSGNSYSPYGGDGGGGGSSGGSSGGGMDVMGGTTRGSSSSSGDDSNVFQMIFGSDAPSRPRLTLLFSLLMISVLSLSTLLL.

An N-terminal signal peptide occupies residues 1–22 (MLLQNFSNTIFLLCLFFTLLSA). Residues Asn-27 and Asn-49 are each glycosylated (N-linked (GlcNAc...) asparagine). The interval 55–78 (RQLSSPSSSSSSSSSSSSSSCRTG) is disordered. Over residues 58-74 (SSPSSSSSSSSSSSSSS) the composition is skewed to low complexity. The Ca(2+) site is built by Asp-217, Asp-241, and Asp-245. Arg-297 is an active-site residue. Disordered regions lie at residues 329-359 (INSQ…DGEW) and 408-463 (NAGV…SSGD). A compositionally biased stretch (basic and acidic residues) spans 343 to 357 (SAKEVTKRVDSKDDG). Over residues 430–449 (GGDGGGGGSSGGSSGGGMDV) the composition is skewed to gly residues. Residues 450–463 (MGGTTRGSSSSSGD) are compositionally biased toward low complexity. The GPI-anchor amidated serine moiety is linked to residue Ser-474. Positions 475 to 501 (DAPSRPRLTLLFSLLMISVLSLSTLLL) are cleaved as a propeptide — removed in mature form.

Belongs to the polysaccharide lyase 1 family. The cofactor is Ca(2+). Expressed equally in mature leaves, buds, flowers, rosettes and roots.

The protein localises to the cell membrane. The catalysed reaction is Eliminative cleavage of (1-&gt;4)-alpha-D-galacturonan to give oligosaccharides with 4-deoxy-alpha-D-galact-4-enuronosyl groups at their non-reducing ends.. It functions in the pathway glycan metabolism; pectin degradation; 2-dehydro-3-deoxy-D-gluconate from pectin: step 2/5. Its function is as follows. Susceptibility factor required for infection by most powdery mildews, but not by unrelated pathogens. Exact function not known, but clearly affects cell wall composition. This is Probable pectate lyase 13 (PMR6) from Arabidopsis thaliana (Mouse-ear cress).